The following is a 207-amino-acid chain: Alpha-1-acid glycoprotein 8 (207 aa).

An N-terminal signal peptide occupies residues 1–18 (MALHTVLIMLSLLPMLEA). N-linked (GlcNAc...) asparagine glycans are attached at residues N25, N34, N76, N94, and N104. The cysteines at positions 91 and 184 are disulfide-linked.

The protein belongs to the calycin superfamily. Lipocalin family. In terms of tissue distribution, expressed by the liver and secreted in plasma.

It localises to the secreted. Functionally, functions as a transport protein in the blood stream. Binds various ligands in the interior of its beta-barrel domain. Appears to function in modulating the activity of the immune system during the acute-phase reaction. This is Alpha-1-acid glycoprotein 8 (Orm8) from Mus caroli (Ryukyu mouse).